The sequence spans 129 residues: Small ribosomal subunit protein uS11 (129 aa).

Belongs to the universal ribosomal protein uS11 family. As to quaternary structure, part of the 30S ribosomal subunit. Interacts with proteins S7 and S18. Binds to IF-3.

Functionally, located on the platform of the 30S subunit, it bridges several disparate RNA helices of the 16S rRNA. Forms part of the Shine-Dalgarno cleft in the 70S ribosome. The chain is Small ribosomal subunit protein uS11 from Pasteurella multocida (strain Pm70).